Consider the following 502-residue polypeptide: Probable cytosol aminopeptidase (502 aa).

Mn(2+) contacts are provided by lysine 270 and aspartate 275. Lysine 282 is an active-site residue. The Mn(2+) site is built by aspartate 293, aspartate 352, and glutamate 354. Residue arginine 356 is part of the active site.

Belongs to the peptidase M17 family. The cofactor is Mn(2+).

It localises to the cytoplasm. The enzyme catalyses Release of an N-terminal amino acid, Xaa-|-Yaa-, in which Xaa is preferably Leu, but may be other amino acids including Pro although not Arg or Lys, and Yaa may be Pro. Amino acid amides and methyl esters are also readily hydrolyzed, but rates on arylamides are exceedingly low.. It carries out the reaction Release of an N-terminal amino acid, preferentially leucine, but not glutamic or aspartic acids.. Functionally, presumably involved in the processing and regular turnover of intracellular proteins. Catalyzes the removal of unsubstituted N-terminal amino acids from various peptides. In Desulfotalea psychrophila (strain LSv54 / DSM 12343), this protein is Probable cytosol aminopeptidase.